The following is a 987-amino-acid chain: ATP-dependent 6-phosphofructokinase subunit alpha (987 aa).

The interval 1–580 (MQSQDSCYGV…LYENFLSTTV (580 aa)) is N-terminal catalytic PFK domain 1. Ser-3 carries the post-translational modification Phosphoserine. A Glycyl lysine isopeptide (Lys-Gly) (interchain with G-Cter in ubiquitin) cross-link involves residue Lys-89. Phosphoserine is present on residues Ser-166, Ser-179, Ser-185, Ser-189, and Ser-192. Residue Gly-215 coordinates ATP. Phosphoserine is present on Ser-217. ATP-binding positions include 278 to 279 (RS) and 308 to 311 (GDGS). Asp-309 provides a ligand contact to Mg(2+). Beta-D-fructose 6-phosphate is bound by residues 354–356 (SID), Arg-391, and 398–400 (MGR). Catalysis depends on Asp-356, which acts as the Proton acceptor. Position 450 is a phosphothreonine (Thr-450). Residues Glu-455, Lys-482, and 488–491 (HVQR) each bind beta-D-fructose 6-phosphate. Residues 581–594 (KDDGSELLPVSDRL) are interdomain linker. The interval 595–987 (NIGIVHVGAP…EVAALAAENK (393 aa)) is C-terminal regulatory PFK domain 2. Lys-625 is covalently cross-linked (Glycyl lysine isopeptide (Lys-Gly) (interchain with G-Cter in ubiquitin)). Residues Arg-665, 722 to 726 (TVSNN), Arg-760, 767 to 769 (QGG), Glu-827, Arg-853, 859 to 862 (HVQQ), and Arg-952 each bind beta-D-fructose 2,6-bisphosphate.

The protein belongs to the phosphofructokinase type A (PFKA) family. ATP-dependent PFK group I subfamily. Eukaryotic two domain clade 'E' sub-subfamily. Heterooctamer of 4 alpha and 4 beta chains. Mg(2+) is required as a cofactor.

It localises to the cytoplasm. The protein resides in the mitochondrion outer membrane. It catalyses the reaction beta-D-fructose 6-phosphate + ATP = beta-D-fructose 1,6-bisphosphate + ADP + H(+). It participates in carbohydrate degradation; glycolysis; D-glyceraldehyde 3-phosphate and glycerone phosphate from D-glucose: step 3/4. Its activity is regulated as follows. Allosterically activated by ADP, AMP, or fructose 2,6-bisphosphate, and allosterically inhibited by ATP or citrate. Functionally, catalyzes the phosphorylation of D-fructose 6-phosphate to fructose 1,6-bisphosphate by ATP, the first committing step of glycolysis. The sequence is that of ATP-dependent 6-phosphofructokinase subunit alpha (PFK1) from Saccharomyces cerevisiae (strain ATCC 204508 / S288c) (Baker's yeast).